The primary structure comprises 625 residues: MTLLYQMVHFALFASVAGECVTTLFQDACFKGGDITVAFAPNAKHCQIICTHHPRCLLFTFMTESSSEDPTKWYTCILKDSVTETLPMVNMTGAISGYSSKQCLHHISACSKDMYVDLNMKGMNYNSSLAQSARECQQRCTDDTHCHFFTFATRHFPSIKDRNTCLLKNTQTGTPTSITKLHEVVSGFSLKSCGLSNLACIRDIFPRTAFVDITIDTVMAPDPFVCRSICTHHPSCLFFTFLSEEWPTASERNLCLLKTSSSGLPSARFRKNRAFSGFSLQHCQHSVPVFCHSSFYRNTDFLGEELDIVDADSHEACQKTCTNSIRCQFFTYSPSQESCNGGKGKCYLKLSANGSPTKILHGTGSISGYTLRLCKMDNVCTTKIKTRIVGGTQSVHGEWPWQITLHVTSPTQRHLCGGAIIGNQWILTAAHCFNEVKSPNVLRVYSGILNQSEIKEDTSFFGVQEIIIHDQYEKAESGYDIALLKLETAMNYTDSQWPICLPSKGDRNVMYTECWVTGWGYRKLRDKIQNTLQKAKVPLMTNEECQAGYREHRITSKMVCAGYREGGKDACKGDSGGPLSCKHNEVWHLVGITSWGEGCGQRERPGVYSNVVEYVDWILEKTQGP.

An N-terminal signal peptide occupies residues 1–18; that stretch reads MTLLYQMVHFALFASVAG. Apple domains lie at 20–103, 110–193, 200–283, and 291–374; these read CVTT…SKQC, CSKD…LKSC, CIRD…LQHC, and CHSS…LRLC. 17 disulfide bridges follow: C20/C103, C46/C76, C50/C56, C110/C193, C136/C165, C140/C146, C200/C283, C226/C255, C230/C236, C291/C374, C317/C346, C321/C327, C380/C500, C416/C432, C514/C581, C545/C560, and C571/C599. N-linked (GlcNAc...) asparagine glycans are attached at residues N90 and N126. A Peptidase S1 domain is found at 388 to 623; sequence IVGGTQSVHG…YVDWILEKTQ (236 aa). Catalysis depends on H431, which acts as the Charge relay system. An N-linked (GlcNAc...) asparagine glycan is attached at N450. The Charge relay system role is filled by D480. N-linked (GlcNAc...) asparagine glycosylation occurs at N491. 547 to 550 provides a ligand contact to heparin; that stretch reads AGYR. Residue S575 is the Charge relay system of the active site.

This sequence belongs to the peptidase S1 family. Plasma kallikrein subfamily. As to quaternary structure, homodimer; disulfide-linked. After activation the heavy and light chains are also linked by a disulfide bond. Interacts (activated) with F9 (inactive and activated) in calcium-dependent manner. Forms a heterodimer with SERPINA5. In terms of processing, activated by factor XIIa (or XII), which cleaves each polypeptide after Arg-387 into the light chain, which contains the active site, and the heavy chain, which associates with high molecular weight (HMW) kininogen. Activated by F12 (activated); the presence of negatively charged surfaces accelerates activation. Activated by F2 (thrombin); the presence of negatively charged surfaces, such as polyphosphate and dextran sulfate, strongly accelerates activation. Autoactivated; the presence of negatively charged surfaces, such as polyphosphate and dextran sulfate, accelerates autoactivation and autolysis. Post-translationally, N-glycosylated on both chains. N-glycosylated sites mainly consist of nonfucosylated sialylated biantennary (in high abundance) and/or triantennary (in low abundance) complex structures.

It localises to the secreted. The enzyme catalyses Selective cleavage of Arg-|-Ala and Arg-|-Val bonds in factor IX to form factor IXa.. Its activity is regulated as follows. Inhibited by SERPINA5. Its function is as follows. Factor XI triggers the middle phase of the intrinsic pathway of blood coagulation by activating factor IX. This is Coagulation factor XI (F11) from Bos taurus (Bovine).